Reading from the N-terminus, the 163-residue chain is 2-C-methyl-D-erythritol 2,4-cyclodiphosphate synthase (163 aa).

Residues Asp-15 and His-17 each contribute to the a divalent metal cation site. 4-CDP-2-C-methyl-D-erythritol 2-phosphate contacts are provided by residues 15–17 (DFH) and 41–42 (HS). Position 49 (His-49) interacts with a divalent metal cation. 4-CDP-2-C-methyl-D-erythritol 2-phosphate-binding positions include 63–65 (DIG) and 139–142 (TTNE).

This sequence belongs to the IspF family. Homotrimer. The cofactor is a divalent metal cation.

It carries out the reaction 4-CDP-2-C-methyl-D-erythritol 2-phosphate = 2-C-methyl-D-erythritol 2,4-cyclic diphosphate + CMP. It participates in isoprenoid biosynthesis; isopentenyl diphosphate biosynthesis via DXP pathway; isopentenyl diphosphate from 1-deoxy-D-xylulose 5-phosphate: step 4/6. In terms of biological role, involved in the biosynthesis of isopentenyl diphosphate (IPP) and dimethylallyl diphosphate (DMAPP), two major building blocks of isoprenoid compounds. Catalyzes the conversion of 4-diphosphocytidyl-2-C-methyl-D-erythritol 2-phosphate (CDP-ME2P) to 2-C-methyl-D-erythritol 2,4-cyclodiphosphate (ME-CPP) with a corresponding release of cytidine 5-monophosphate (CMP). The sequence is that of 2-C-methyl-D-erythritol 2,4-cyclodiphosphate synthase from Gloeobacter violaceus (strain ATCC 29082 / PCC 7421).